The following is a 567-amino-acid chain: DNA ligase B (567 aa).

The active-site N6-AMP-lysine intermediate is the Lys-132.

This sequence belongs to the NAD-dependent DNA ligase family. LigB subfamily.

It carries out the reaction NAD(+) + (deoxyribonucleotide)n-3'-hydroxyl + 5'-phospho-(deoxyribonucleotide)m = (deoxyribonucleotide)n+m + AMP + beta-nicotinamide D-nucleotide.. In terms of biological role, catalyzes the formation of phosphodiester linkages between 5'-phosphoryl and 3'-hydroxyl groups in double-stranded DNA using NAD as a coenzyme and as the energy source for the reaction. The chain is DNA ligase B from Yersinia pseudotuberculosis serotype IB (strain PB1/+).